Consider the following 206-residue polypeptide: Ras-related protein Ral-B (206 aa).

GTP is bound at residue 21–29 (GSGGVGKSA). The short motif at 43–51 (YEPTKADSY) is the Effector region element. GTP-binding positions include 68–72 (DTAGQ), 128–131 (NKSD), and 158–160 (SAK). The tract at residues 181-206 (MSENKDKNGRKSSKSKKSFKERCCLL) is disordered. A Cysteine methyl ester modification is found at cysteine 203. Residue cysteine 203 is the site of S-geranylgeranyl cysteine attachment. Residues 204–206 (CLL) constitute a propeptide, removed in mature form.

The protein belongs to the small GTPase superfamily. Ras family. As to quaternary structure, interacts with EXOC2/Sec5 and EXOC8/Exo84. Interacts (via effector domain) with RALBP1. In terms of processing, prenylation is essential for membrane localization. The farnesylated form confers resistance to the proapoptotic and anti-anchorage-dependent growth effects of some geranylgeranyltransferase I inhibitors.

Its subcellular location is the cell membrane. The protein localises to the midbody. It carries out the reaction GTP + H2O = GDP + phosphate + H(+). Its activity is regulated as follows. Alternates between an inactive form bound to GDP and an active form bound to GTP. Activated by a guanine nucleotide-exchange factor (GEF) and inactivated by a GTPase-activating protein (GAP). In terms of biological role, multifunctional GTPase involved in a variety of cellular processes including gene expression, cell migration, cell proliferation, oncogenic transformation and membrane trafficking. Accomplishes its multiple functions by interacting with distinct downstream effectors. Acts as a GTP sensor for GTP-dependent exocytosis of dense core vesicles. Required both to stabilize the assembly of the exocyst complex and to localize functional exocyst complexes to the leading edge of migrating cells. Required for suppression of apoptosis. In late stages of cytokinesis, upon completion of the bridge formation between dividing cells, mediates exocyst recruitment to the midbody to drive abscission. Involved in ligand-dependent receptor mediated endocytosis of the EGF and insulin receptors. The polypeptide is Ras-related protein Ral-B (Ralb) (Mus musculus (Mouse)).